Reading from the N-terminus, the 244-residue chain is Cell adhesion molecule CEACAM4 (244 aa).

The N-terminal stretch at 1 to 35 (MGPPSAAPRGGHRPWQGLLITASLLTFWHPPTTVQ) is a signal peptide. The region spanning 36 to 139 (FTIEALPSSA…DSDQATGQLH (104 aa)) is the Ig-like V-type domain. At 36–155 (FTIEALPSSA…PGLPVGAVAG (120 aa)) the chain is on the extracellular side. 4 N-linked (GlcNAc...) asparagine glycosylation sites follow: Asn-57, Asn-104, Asn-111, and Asn-126. Residues 156-176 (IVTGVLVGVALVAALVCFLLL) form a helical membrane-spanning segment. Topologically, residues 177-244 (SRTGRASIQR…QIDHKADVVS (68 aa)) are cytoplasmic. Residues 186–215 (RDLREQPPPASTPGHGPSHRSTFSAPLPSP) form a disordered region. Residues 222 to 236 (YEELLYSDANIYCQI) carry the ITAM motif.

It belongs to the immunoglobulin superfamily. CEA family. In terms of assembly, interacts through its phosphorylated ITAM domain with the SH2 domain-containing cytoplasmic proteins involved in signaling processes during phagocytosis. N-glycosylated. Post-translationally, the cytoplasmic ITAM-like sequence becomes tyrosine phosphorylated by SRC family PTKs upon ligand-mediated receptor clustering and allows to initiate phagocytosis of bound ligand. Granulocytes.

It localises to the membrane. Granulocyte orphan receptor that acts as an trigger efficient phagocytosis of attached particles. This is Cell adhesion molecule CEACAM4 from Homo sapiens (Human).